Reading from the N-terminus, the 218-residue chain is Glutathione S-transferase Mu 3 (218 aa).

In terms of domain architecture, GST N-terminal spans 2–88; the sequence is PMTLGYWNTR…YLGRKHNLCG (87 aa). Glutathione contacts are provided by residues 7 to 8, 46 to 50, and 59 to 60; these read YW, WLSEK, and NL. Lys50 participates in a covalent cross-link: Glycyl lysine isopeptide (Lys-Gly) (interchain with G-Cter in SUMO2). Lys69 participates in a covalent cross-link: Glycyl lysine isopeptide (Lys-Gly) (interchain with G-Cter in SUMO2). 72–73 serves as a coordination point for glutathione; sequence QS. A GST C-terminal domain is found at 90–208; the sequence is TEEERIRVDT…KSSRFLPRPV (119 aa).

It belongs to the GST superfamily. Mu family. Homodimer.

It localises to the cytoplasm. It carries out the reaction RX + glutathione = an S-substituted glutathione + a halide anion + H(+). Functionally, conjugation of reduced glutathione to a wide number of exogenous and endogenous hydrophobic electrophiles. This chain is Glutathione S-transferase Mu 3 (Gstm3), found in Mus musculus (Mouse).